Reading from the N-terminus, the 346-residue chain is Phosphate acyltransferase (346 aa).

Belongs to the PlsX family. In terms of assembly, homodimer. Probably interacts with PlsY.

The protein localises to the cytoplasm. The catalysed reaction is a fatty acyl-[ACP] + phosphate = an acyl phosphate + holo-[ACP]. Its pathway is lipid metabolism; phospholipid metabolism. Its function is as follows. Catalyzes the reversible formation of acyl-phosphate (acyl-PO(4)) from acyl-[acyl-carrier-protein] (acyl-ACP). This enzyme utilizes acyl-ACP as fatty acyl donor, but not acyl-CoA. The polypeptide is Phosphate acyltransferase (Crocosphaera subtropica (strain ATCC 51142 / BH68) (Cyanothece sp. (strain ATCC 51142))).